An 826-amino-acid polypeptide reads, in one-letter code: Ubiquitin carboxyl-terminal hydrolase 16 (826 aa).

The UBP-type zinc-finger motif lies at Pro-22–Ala-142. Cys-24, His-26, Cys-48, Cys-51, Cys-74, Cys-77, Cys-82, His-90, His-94, His-103, Cys-116, and Cys-119 together coordinate Zn(2+). Lys-140 participates in a covalent cross-link: Glycyl lysine isopeptide (Lys-Gly) (interchain with G-Cter in SUMO2). Residues Thr-146–Pro-190 form a disordered region. Positions Pro-149 to Ala-181 are enriched in basic and acidic residues. Phosphoserine is present on Ser-189. In terms of domain architecture, USP spans Lys-196–Ile-825. Cys-205 (nucleophile) is an active-site residue. Basic and acidic residues predominate over residues Ser-394 to Met-408. Residues Ser-394–Ile-460 form a disordered region. Residues Glu-409–Asp-420 show a composition bias toward acidic residues. Ser-415 is subject to Phosphoserine. Over residues Asn-421–Asp-430 the composition is skewed to basic and acidic residues. Over residues His-438–Gln-458 the composition is skewed to basic residues. Ser-552 carries the phosphoserine modification. Position 557 is a phosphothreonine (Thr-557). The active-site Proton acceptor is the His-761.

It belongs to the peptidase C19 family. USP16 subfamily. Homotetramer. Associates with late pre-40S ribosomes. Interacts with CEP78; promoting deubiquitination of tektins. Phosphorylated at the onset of mitosis and dephosphorylated during the metaphase/anaphase transition. Phosphorylation by AURKB enhances the deubiquitinase activity.

The protein resides in the nucleus. The catalysed reaction is Thiol-dependent hydrolysis of ester, thioester, amide, peptide and isopeptide bonds formed by the C-terminal Gly of ubiquitin (a 76-residue protein attached to proteins as an intracellular targeting signal).. Its function is as follows. Specifically deubiquitinates 'Lys-120' of histone H2A (H2AK119Ub), a specific tag for epigenetic transcriptional repression, thereby acting as a coactivator. Deubiquitination of histone H2A is a prerequisite for subsequent phosphorylation at 'Ser-11' of histone H3 (H3S10ph), and is required for chromosome segregation when cells enter into mitosis. In resting B- and T-lymphocytes, phosphorylation by AURKB leads to enhance its activity, thereby maintaining transcription in resting lymphocytes. Regulates Hox gene expression via histone H2A deubiquitination. Prefers nucleosomal substrates. Does not deubiquitinate histone H2B. Also deubiquitinates non-histone proteins, such as ribosomal protein RPS27A: deubiquitination of monoubiquitinated RPS27A promotes maturation of the 40S ribosomal subunit. Also mediates deubiquitination of tektin proteins (TEKT1, TEKT2, TEK3, TEKT4 and TEKT5), promoting their stability. The protein is Ubiquitin carboxyl-terminal hydrolase 16 of Macaca fascicularis (Crab-eating macaque).